We begin with the raw amino-acid sequence, 118 residues long: Holo-[acyl-carrier-protein] synthase (118 aa).

2 residues coordinate Mg(2+): Asp8 and Glu58.

This sequence belongs to the P-Pant transferase superfamily. AcpS family. The cofactor is Mg(2+).

It is found in the cytoplasm. The catalysed reaction is apo-[ACP] + CoA = holo-[ACP] + adenosine 3',5'-bisphosphate + H(+). Functionally, transfers the 4'-phosphopantetheine moiety from coenzyme A to a Ser of acyl-carrier-protein. This is Holo-[acyl-carrier-protein] synthase from Streptococcus equi subsp. zooepidemicus (strain H70).